The sequence spans 67 residues: Penaeidin-4d (67 aa).

An N-terminal signal peptide occupies residues 1 to 19 (MRLLVCLVFLASFAMVCQG). Disulfide bonds link C42–C56, C45–C63, and C57–C64. Position 66 is a leucine amide (L66).

It belongs to the penaeidin family.

The protein localises to the cytoplasmic granule. Functionally, antibacterial and antifungal activity. Presents chitin-binding activity. This Penaeus setiferus (Atlantic white shrimp) protein is Penaeidin-4d.